A 299-amino-acid chain; its full sequence is Protoheme IX farnesyltransferase 1 (299 aa).

Transmembrane regions (helical) follow at residues 25–45 (VVVL…RAGV), 47–67 (WSVL…AAVV), 95–115 (LPAL…LLAF), 119–139 (LTAW…TGFL), 147–167 (IVIG…AVSG), 173–193 (PLLL…ALAI), 217–237 (ALHI…PYAI), 243–263 (LYLA…WVLY), and 279–299 (IGYL…LLNL).

This sequence belongs to the UbiA prenyltransferase family. Protoheme IX farnesyltransferase subfamily.

It localises to the cell inner membrane. The enzyme catalyses heme b + (2E,6E)-farnesyl diphosphate + H2O = Fe(II)-heme o + diphosphate. The protein operates within porphyrin-containing compound metabolism; heme O biosynthesis; heme O from protoheme: step 1/1. Functionally, converts heme B (protoheme IX) to heme O by substitution of the vinyl group on carbon 2 of heme B porphyrin ring with a hydroxyethyl farnesyl side group. The protein is Protoheme IX farnesyltransferase 1 of Pseudomonas entomophila (strain L48).